We begin with the raw amino-acid sequence, 107 residues long: U1-lycotoxin-Ls1v (107 aa).

Residues 1–20 (MMKVLVVVALLVTLISYSSS) form the signal peptide. A propeptide spanning residues 21–41 (EGIDDLEADELLSLTANEQTR) is cleaved from the precursor. Disulfide bonds link cysteine 44/cysteine 59, cysteine 51/cysteine 68, cysteine 58/cysteine 86, and cysteine 70/cysteine 84.

It belongs to the neurotoxin 19 (CSTX) family. 04 (U1-Lctx) subfamily. As to expression, expressed by the venom gland.

It is found in the secreted. This is U1-lycotoxin-Ls1v from Lycosa singoriensis (Wolf spider).